The following is a 774-amino-acid chain: Beta-xylosidase/alpha-L-arabinofuranosidase 2 (774 aa).

A signal peptide spans 1–33 (MASVENRTPNVSVFLCFFVLFATLLLSGGRVSS). A glycan (N-linked (GlcNAc...) asparagine) is linked at Asn-136. Asp-303 is an active-site residue. N-linked (GlcNAc...) asparagine glycosylation is present at Asn-437.

Belongs to the glycoside hydrolase 3 family.

Its subcellular location is the secreted. The protein localises to the extracellular space. It localises to the extracellular matrix. It carries out the reaction Hydrolysis of (1-&gt;4)-beta-D-xylans, to remove successive D-xylose residues from the non-reducing termini.. It catalyses the reaction Hydrolysis of terminal non-reducing alpha-L-arabinofuranoside residues in alpha-L-arabinosides.. Its function is as follows. A bifunctional beta-xylosidase/alpha-L-arabinosidase, exo-enzyme that acts synergistically with endohydrolases. Releases xylose and arabinose from cell walls. The protein is Beta-xylosidase/alpha-L-arabinofuranosidase 2 of Medicago sativa subsp. varia (Alfalfa).